A 347-amino-acid chain; its full sequence is 8-amino-8-demethylriboflavin N,N-dimethyltransferase (347 aa).

Residues aspartate 209 and 235–237 (GDF) each bind S-adenosyl-L-methionine.

This sequence belongs to the class I-like SAM-binding methyltransferase superfamily. Cation-independent O-methyltransferase family. In terms of assembly, homodimer.

The enzyme catalyses 8-amino-8-demethylriboflavin + 2 S-adenosyl-L-methionine = roseoflavin + 2 S-adenosyl-L-homocysteine + 2 H(+). The protein operates within antibiotic biosynthesis. Its function is as follows. Catalyzes the S-adenosyl methionine-dependent conversion of 8-amino-8-demethyl-D-riboflavin (AF) into 8-methylamino-8-demethyl-D-riboflavin (MAF) and roseoflavin (RoF), the last two steps in the biosynthesis of the antibiotic roseoflavin. The polypeptide is 8-amino-8-demethylriboflavin N,N-dimethyltransferase (Streptomyces davaonensis (strain DSM 101723 / JCM 4913 / KCC S-0913 / 768)).